The sequence spans 574 residues: Proline--tRNA ligase (574 aa).

This sequence belongs to the class-II aminoacyl-tRNA synthetase family. ProS type 1 subfamily. In terms of assembly, homodimer.

It is found in the cytoplasm. It carries out the reaction tRNA(Pro) + L-proline + ATP = L-prolyl-tRNA(Pro) + AMP + diphosphate. Catalyzes the attachment of proline to tRNA(Pro) in a two-step reaction: proline is first activated by ATP to form Pro-AMP and then transferred to the acceptor end of tRNA(Pro). As ProRS can inadvertently accommodate and process non-cognate amino acids such as alanine and cysteine, to avoid such errors it has two additional distinct editing activities against alanine. One activity is designated as 'pretransfer' editing and involves the tRNA(Pro)-independent hydrolysis of activated Ala-AMP. The other activity is designated 'posttransfer' editing and involves deacylation of mischarged Ala-tRNA(Pro). The misacylated Cys-tRNA(Pro) is not edited by ProRS. The sequence is that of Proline--tRNA ligase from Anaeromyxobacter sp. (strain K).